Consider the following 677-residue polypeptide: Methionine--tRNA ligase (677 aa).

The short motif at 15–25 (PYANGSIHLGH) is the 'HIGH' region element. Zn(2+) is bound by residues Cys-146, Cys-149, Cys-159, and Cys-162. Residues 333–337 (KMSKS) carry the 'KMSKS' region motif. Residue Lys-336 participates in ATP binding. Residues 575 to 677 (DFAKIDLRVA…DGAKPGQQVK (103 aa)) form the tRNA-binding domain.

Belongs to the class-I aminoacyl-tRNA synthetase family. MetG type 1 subfamily. In terms of assembly, homodimer. Zn(2+) is required as a cofactor.

The protein resides in the cytoplasm. The catalysed reaction is tRNA(Met) + L-methionine + ATP = L-methionyl-tRNA(Met) + AMP + diphosphate. In terms of biological role, is required not only for elongation of protein synthesis but also for the initiation of all mRNA translation through initiator tRNA(fMet) aminoacylation. The protein is Methionine--tRNA ligase of Salmonella typhi.